The sequence spans 559 residues: Dihydroxy-acid dehydratase (559 aa).

Asp-80 serves as a coordination point for Mg(2+). Cys-121 contacts [2Fe-2S] cluster. 2 residues coordinate Mg(2+): Asp-122 and Lys-123. Lys-123 carries the post-translational modification N6-carboxylysine. Cys-194 provides a ligand contact to [2Fe-2S] cluster. Glu-447 provides a ligand contact to Mg(2+). Catalysis depends on Ser-473, which acts as the Proton acceptor.

This sequence belongs to the IlvD/Edd family. Homodimer. The cofactor is [2Fe-2S] cluster. It depends on Mg(2+) as a cofactor.

The enzyme catalyses (2R)-2,3-dihydroxy-3-methylbutanoate = 3-methyl-2-oxobutanoate + H2O. It catalyses the reaction (2R,3R)-2,3-dihydroxy-3-methylpentanoate = (S)-3-methyl-2-oxopentanoate + H2O. It participates in amino-acid biosynthesis; L-isoleucine biosynthesis; L-isoleucine from 2-oxobutanoate: step 3/4. Its pathway is amino-acid biosynthesis; L-valine biosynthesis; L-valine from pyruvate: step 3/4. Functionally, functions in the biosynthesis of branched-chain amino acids. Catalyzes the dehydration of (2R,3R)-2,3-dihydroxy-3-methylpentanoate (2,3-dihydroxy-3-methylvalerate) into 2-oxo-3-methylpentanoate (2-oxo-3-methylvalerate) and of (2R)-2,3-dihydroxy-3-methylbutanoate (2,3-dihydroxyisovalerate) into 2-oxo-3-methylbutanoate (2-oxoisovalerate), the penultimate precursor to L-isoleucine and L-valine, respectively. The protein is Dihydroxy-acid dehydratase of Chlorobium chlorochromatii (strain CaD3).